Consider the following 96-residue polypeptide: NADH-ubiquinone oxidoreductase chain 4L (96 aa).

The next 3 membrane-spanning stretches (helical) occupy residues 1–21 (MPTT…SLQR), 27–47 (LLLT…LWAL), and 57–77 (APLI…SLMI).

This sequence belongs to the complex I subunit 4L family.

It localises to the mitochondrion membrane. It catalyses the reaction a ubiquinone + NADH + 5 H(+)(in) = a ubiquinol + NAD(+) + 4 H(+)(out). Its function is as follows. Core subunit of the mitochondrial membrane respiratory chain NADH dehydrogenase (Complex I) which catalyzes electron transfer from NADH through the respiratory chain, using ubiquinone as an electron acceptor. Part of the enzyme membrane arm which is embedded in the lipid bilayer and involved in proton translocation. This is NADH-ubiquinone oxidoreductase chain 4L (MT-ND4L) from Petromyzon marinus (Sea lamprey).